We begin with the raw amino-acid sequence, 425 residues long: MFGLNKTPSFGSTGTQNQNTGTSAGTGLFSSNTFGNNTQANTPASTGFGGVTGGAFGQTKPQTGGSLFGNKPNATSTTPGLNLFGQNPQAAPGGSLFGASTTKPQAPGGLFNQNQTQAQPAQAAPTGGLFGLSGQNQTQSQTQPAQANTSLFGQSNIGTTGGLFDQNRPNTSTFGQFSTQPASAGLFGQSTQPSGSTGFGLSNNTQTTPFFSAAQQQPSTTQLPSNPAINATTRYSSLNANTQKFLDDLDKEIFSQIQLAEELQTKLGTVSELVESVPNDVAEVQRRLSSVSTALLIDSDEIETTKRVVDEDTSNARISSRILDVFKTPGATYPFASNDPLMNYFEQFTENAKKRTDLYAATIGELEQHLEQVETTPQNNSPEALLKTIKEEHKLFMALSNRFAQVHDEVKRLQVNTSTSLPFIS.

Residues 1–10 show a composition bias toward polar residues; that stretch reads MFGLNKTPSF. The tract at residues 1–207 is disordered; sequence MFGLNKTPSF…GFGLSNNTQT (207 aa). Residues 11–27 show a composition bias toward low complexity; it reads GSTGTQNQNTGTSAGTG. Polar residues predominate over residues 28–45; it reads LFSSNTFGNNTQANTPAS. Positions 47 to 56 are enriched in gly residues; it reads GFGGVTGGAF. Polar residues predominate over residues 72-89; that stretch reads PNATSTTPGLNLFGQNPQ. Composition is skewed to low complexity over residues 112–126 and 135–150; these read NQNQTQAQPAQAAPT and QNQTQSQTQPAQANTS. A compositionally biased stretch (polar residues) spans 167 to 207; sequence NRPNTSTFGQFSTQPASAGLFGQSTQPSGSTGFGLSNNTQT. Phosphoserine is present on residues Ser289 and Ser290.

Its subcellular location is the cytoplasm. The protein localises to the nucleus. It is found in the nuclear pore complex. Functionally, functions as a component of the nuclear pore complex (NPC). NPC components, collectively referred to as nucleoporins (NUPs), can play the role of both NPC structural components and of docking or interaction partners for transiently associated nuclear transport factors. Active directional transport is assured by both, a Phe-Gly (FG) repeat affinity gradient for these transport factors across the NPC and a transport cofactor concentration gradient across the nuclear envelope. In Schizosaccharomyces pombe (strain 972 / ATCC 24843) (Fission yeast), this protein is Nucleoporin nup45 (nup45).